The primary structure comprises 226 residues: Ribosome-recycling factor, mitochondrial (226 aa).

The protein belongs to the RRF family.

The protein resides in the mitochondrion. In terms of biological role, necessary for protein synthesis in mitochondria. Functions as a ribosome recycling factor in mitochondria. The chain is Ribosome-recycling factor, mitochondrial (RRF1) from Eremothecium gossypii (strain ATCC 10895 / CBS 109.51 / FGSC 9923 / NRRL Y-1056) (Yeast).